The sequence spans 1353 residues: Protein prickle (1353 aa).

Disordered stretches follow at residues 130 to 206 (VDDG…TKRN), 266 to 292 (QEEEPPEPPKPALPPKQKQPRPVPPLP), and 500 to 540 (AKYS…SAHA). Low complexity predominate over residues 147-165 (TPTATATAGRPLFPLSSSP). Residues 166–178 (RRSKKLLRSLRAH) show a composition bias toward basic residues. Positions 179 to 189 (VKGESRPEKPA) are enriched in basic and acidic residues. A compositionally biased stretch (low complexity) spans 514-532 (LSPALSTPSPPSLLHHPAA). In terms of domain architecture, PET spans 548-656 (MDMQRQSHSD…NVRQLMSARP (109 aa)). LIM zinc-binding domains are found at residues 655 to 719 (RPCD…ETLK), 720 to 780 (PRCS…MFAE), and 781 to 843 (YCDY…GEPP). Disordered regions lie at residues 840-892 (GEPP…HQAS), 933-962 (HCRSGDHAGGGDFTDFSGGRASSTSHNMSP), and 1062-1303 (ADIM…SSSS). The span at 861–892 (TQRVRPQTRITSSHASSSPPMSPQQQQQHQAS) shows a compositional bias: low complexity. Polar residues-rich tracts occupy residues 952 to 962 (RASSTSHNMSP) and 1111 to 1120 (SLNTPLSAHS). The segment covering 1130–1142 (SILSGASSSSPMS) has biased composition (low complexity). Basic and acidic residues predominate over residues 1177 to 1205 (GDKDRDRDRERDRDRDRDKGGDKDRESGR). 2 stretches are compositionally biased toward basic residues: residues 1207–1220 (GPGHSSRRRRRRKS) and 1228–1240 (NHHRSGSGHRSHS). Residues 1269–1284 (ETAHKSPRQQRERERE) show a composition bias toward basic and acidic residues.

It belongs to the prickle / espinas / testin family. In terms of assembly, interacts with dsh; PET and LIM domains interact with dsh DEP domain, in wing cells. Interacts with Vang in photoreceptor cells.

Its subcellular location is the cell membrane. Its function is as follows. Acts in a planar cell polarity (PCP) complex; polarization along the apical/basal axis of epithelial cells. PCP signaling in the wing disk requires the receptor fz and the cytoplasmic proteins dsh and pk. These act in a feedback loop leading to activation of the jnk cascade and subsequent polarized arrangement of hairs and bristles. Dgo and pk compete with one another for dsh binding, thereby modulating fz dsh activity and ensuring tight control over fz PCP signaling. Vang, stan and pk function together to regulate the establishment of tissue polarity in the adult eye. This Drosophila pseudoobscura pseudoobscura (Fruit fly) protein is Protein prickle.